We begin with the raw amino-acid sequence, 256 residues long: 5-keto-4-deoxy-D-glucarate aldolase (256 aa).

Catalysis depends on H50, which acts as the Proton acceptor. Q151 serves as a coordination point for substrate. E153 is a Mg(2+) binding site. Substrate is bound by residues S178 and D179. D179 provides a ligand contact to Mg(2+).

It belongs to the HpcH/HpaI aldolase family. KDGluc aldolase subfamily. As to quaternary structure, homohexamer; trimer of dimers. It depends on Mg(2+) as a cofactor.

It carries out the reaction 5-dehydro-4-deoxy-D-glucarate = 2-hydroxy-3-oxopropanoate + pyruvate. It catalyses the reaction 2-dehydro-3-deoxy-D-glucarate = 2-hydroxy-3-oxopropanoate + pyruvate. The protein operates within carbohydrate acid metabolism; galactarate degradation; D-glycerate from galactarate: step 2/3. Catalyzes the reversible retro-aldol cleavage of both 5-keto-4-deoxy-D-glucarate and 2-keto-3-deoxy-D-glucarate to pyruvate and tartronic semialdehyde. This is 5-keto-4-deoxy-D-glucarate aldolase from Escherichia coli O6:H1 (strain CFT073 / ATCC 700928 / UPEC).